Consider the following 460-residue polypeptide: Bifunctional protein GlmU (460 aa).

A pyrophosphorylase region spans residues 1–229 (MTNYAIILAA…FNESLGVNDR (229 aa)). Residues 8-11 (LAAG), Lys-22, Gln-72, and 77-78 (GT) contribute to the UDP-N-acetyl-alpha-D-glucosamine site. Residue Asp-102 coordinates Mg(2+). Positions 139, 154, 169, and 227 each coordinate UDP-N-acetyl-alpha-D-glucosamine. Residue Asn-227 participates in Mg(2+) binding. A linker region spans residues 230-250 (VALATAETVMRQRITQKHMVN). Positions 251–460 (GVTFQNPETV…RLAHHPSRSK (210 aa)) are N-acetyltransferase. 2 residues coordinate UDP-N-acetyl-alpha-D-glucosamine: Arg-332 and Lys-350. His-362 (proton acceptor) is an active-site residue. Residues Tyr-365 and Asn-376 each coordinate UDP-N-acetyl-alpha-D-glucosamine. Residues Ala-379, 385–386 (NY), Ser-404, Ala-422, and Arg-439 each bind acetyl-CoA.

In the N-terminal section; belongs to the N-acetylglucosamine-1-phosphate uridyltransferase family. The protein in the C-terminal section; belongs to the transferase hexapeptide repeat family. As to quaternary structure, homotrimer. The cofactor is Mg(2+).

The protein localises to the cytoplasm. It carries out the reaction alpha-D-glucosamine 1-phosphate + acetyl-CoA = N-acetyl-alpha-D-glucosamine 1-phosphate + CoA + H(+). The catalysed reaction is N-acetyl-alpha-D-glucosamine 1-phosphate + UTP + H(+) = UDP-N-acetyl-alpha-D-glucosamine + diphosphate. Its pathway is nucleotide-sugar biosynthesis; UDP-N-acetyl-alpha-D-glucosamine biosynthesis; N-acetyl-alpha-D-glucosamine 1-phosphate from alpha-D-glucosamine 6-phosphate (route II): step 2/2. It functions in the pathway nucleotide-sugar biosynthesis; UDP-N-acetyl-alpha-D-glucosamine biosynthesis; UDP-N-acetyl-alpha-D-glucosamine from N-acetyl-alpha-D-glucosamine 1-phosphate: step 1/1. It participates in bacterial outer membrane biogenesis; LPS lipid A biosynthesis. Catalyzes the last two sequential reactions in the de novo biosynthetic pathway for UDP-N-acetylglucosamine (UDP-GlcNAc). The C-terminal domain catalyzes the transfer of acetyl group from acetyl coenzyme A to glucosamine-1-phosphate (GlcN-1-P) to produce N-acetylglucosamine-1-phosphate (GlcNAc-1-P), which is converted into UDP-GlcNAc by the transfer of uridine 5-monophosphate (from uridine 5-triphosphate), a reaction catalyzed by the N-terminal domain. The polypeptide is Bifunctional protein GlmU (Streptococcus pyogenes serotype M18 (strain MGAS8232)).